Reading from the N-terminus, the 305-residue chain is Homoserine kinase (305 aa).

Residue 90–100 (PLARGLGSSAS) coordinates ATP.

The protein belongs to the GHMP kinase family. Homoserine kinase subfamily.

Its subcellular location is the cytoplasm. The catalysed reaction is L-homoserine + ATP = O-phospho-L-homoserine + ADP + H(+). It participates in amino-acid biosynthesis; L-threonine biosynthesis; L-threonine from L-aspartate: step 4/5. In terms of biological role, catalyzes the ATP-dependent phosphorylation of L-homoserine to L-homoserine phosphate. The sequence is that of Homoserine kinase from Staphylococcus haemolyticus (strain JCSC1435).